We begin with the raw amino-acid sequence, 631 residues long: Altered inheritance of mitochondria protein 9, mitochondrial (631 aa).

A mitochondrion-targeting transit peptide spans 1-41 (MLSRVVRQRSRSAISSFKLRAHAAFAETRIGVGISVQATRL).

It belongs to the AIM9 family.

It localises to the mitochondrion. The protein is Altered inheritance of mitochondria protein 9, mitochondrial (AIM9) of Scheffersomyces stipitis (strain ATCC 58785 / CBS 6054 / NBRC 10063 / NRRL Y-11545) (Yeast).